The following is a 551-amino-acid chain: Calnexin homolog (551 aa).

The N-terminal stretch at 1 to 26 is a signal peptide; the sequence is MVDRKEIPLAMGLLAVLLFFVASSSS. Over 27 to 480 the chain is Lumenal; it reads FHLVRASDEV…EKGEKQPNLT (454 aa). Ser-44 and Asp-75 together coordinate Ca(2+). Cys-118 and Cys-153 are oxidised to a cystine. 2 residues coordinate an alpha-D-glucoside: Tyr-122 and Lys-124. Asn-140 carries N-linked (GlcNAc...) asparagine glycosylation. Residues Tyr-144 and Asp-151 each contribute to the an alpha-D-glucoside site. The disordered stretch occupies residues 226–330; it reads ALIPSKTIPD…CGEWKRPTKS (105 aa). Positions 233–364 are p domain (Extended arm); sequence IPDPDDKKPE…QEIPNPEYFE (132 aa). Basic and acidic residues-rich tracts occupy residues 234 to 269 and 276 to 295; these read PDPD…PREI and KPEP…AKPE. A run of 5 repeats spans residues 235–246, 252–263, 271–282, 289–299, and 303–313. 4 X approximate repeats regions lie at residues 235–299 and 303–360; these read DPDD…DWDD and GEWE…IPNP. Positions 296-305 are enriched in acidic residues; the sequence is DWDDEEDGEW. The cysteines at positions 315 and 321 are disulfide-linked. 3 consecutive repeat copies span residues 322-332, 336-346, and 350-360. Residue Glu-379 coordinates an alpha-D-glucoside. Residue Asp-390 participates in Ca(2+) binding. An N-linked (GlcNAc...) asparagine glycan is attached at Asn-478. A helical transmembrane segment spans residues 481-501; the sequence is IGIIVSVVIVFVSIFFRLIFG. Topologically, residues 502 to 551 are cytoplasmic; the sequence is GKKPANVEANVEKKKTNTETTSKQDGGEKEDNKEKEETANPPRRRPKRDN. Positions 510-551 are disordered; the sequence is ANVEKKKTNTETTSKQDGGEKEDNKEKEETANPPRRRPKRDN. A compositionally biased stretch (basic and acidic residues) spans 526–539; the sequence is DGGEKEDNKEKEET.

The protein belongs to the calreticulin family. In vegetative and flowering tissues.

It is found in the endoplasmic reticulum membrane. Calcium-binding protein that interacts with newly synthesized monoglucosylated glycoproteins in the endoplasmic reticulum. It may act in assisting protein assembly and/or in the retention within the ER of unassembled protein subunits. It seems to play a major role in the quality control apparatus of the ER by the retention of incorrectly folded proteins. The chain is Calnexin homolog from Pisum sativum (Garden pea).